The sequence spans 95 residues: Late cornified envelope protein 7A (95 aa).

This sequence belongs to the LCE family.

Functionally, precursors of the cornified envelope of the stratum corneum. The sequence is that of Late cornified envelope protein 7A from Homo sapiens (Human).